We begin with the raw amino-acid sequence, 823 residues long: Protein phosphatase 1 regulatory subunit 29 (823 aa).

An N-terminal signal peptide occupies residues M1–A22. At D23–Y397 the chain is on the extracellular side. N54 carries N-linked (GlcNAc...) asparagine glycosylation. LRR repeat units lie at residues T56–R77, N80–G101, S104–G125, R128–E149, and S152–S173. N-linked (GlcNAc...) asparagine glycans are attached at residues N80, N85, and N117. One can recognise an LRRCT domain in the interval N185–N247. N205 and N247 each carry an N-linked (GlcNAc...) asparagine glycan. Residues S249–S294 are disordered. One can recognise a Fibronectin type-III domain in the interval D292–T379. A helical membrane pass occupies residues I398 to C418. The Cytoplasmic portion of the chain corresponds to L419–L823. Positions A590 to D624 are disordered. S622, S671, and S675 each carry phosphoserine.

Interacts with PPP1CA.

Its subcellular location is the membrane. Its function is as follows. Inhibits phosphatase activity of protein phosphatase 1 (PP1) complexes. This Mus musculus (Mouse) protein is Protein phosphatase 1 regulatory subunit 29 (Elfn2).